We begin with the raw amino-acid sequence, 694 residues long: Glycine--tRNA ligase beta subunit (694 aa).

This sequence belongs to the class-II aminoacyl-tRNA synthetase family. In terms of assembly, tetramer of two alpha and two beta subunits.

The protein resides in the cytoplasm. It catalyses the reaction tRNA(Gly) + glycine + ATP = glycyl-tRNA(Gly) + AMP + diphosphate. The sequence is that of Glycine--tRNA ligase beta subunit from Lactiplantibacillus plantarum (strain ATCC BAA-793 / NCIMB 8826 / WCFS1) (Lactobacillus plantarum).